We begin with the raw amino-acid sequence, 117 residues long: uncharacterized protein (117 aa).

Positions 1 to 18 (MKFFWVSSLLGLLGLSTA) are cleaved as a signal peptide. Asn-86 is a glycosylation site (N-linked (GlcNAc...) asparagine).

This is an uncharacterized protein from Schizosaccharomyces pombe (strain 972 / ATCC 24843) (Fission yeast).